We begin with the raw amino-acid sequence, 78 residues long: uncharacterized protein (78 aa).

The chain crosses the membrane as a helical span at residues 21–43; it reads SPFLFGAPLVGGLLGGFLGSALF.

It localises to the membrane. This is an uncharacterized protein from Bacillus subtilis (strain 168).